Reading from the N-terminus, the 297-residue chain is Large ribosomal subunit protein uL18 (297 aa).

Lysine 164 participates in a covalent cross-link: Glycyl lysine isopeptide (Lys-Gly) (interchain with G-Cter in ubiquitin). Residues serine 167, serine 176, and serine 235 each carry the phosphoserine modification.

The protein belongs to the universal ribosomal protein uL18 family. Component of the large ribosomal subunit (LSU). Mature yeast ribosomes consist of a small (40S) and a large (60S) subunit. The 40S small subunit contains 1 molecule of ribosomal RNA (18S rRNA) and 33 different proteins (encoded by 57 genes). The large 60S subunit contains 3 rRNA molecules (25S, 5.8S and 5S rRNA) and 46 different proteins (encoded by 81 genes). Component of a hexameric 5S RNP precursor complex, composed of 5S RNA, RRS1, RPF2, RPL5, RPL11A/RPL11B and SYO1; this complex acts as a precursor for ribosome assembly. RPL5/uL18 forms a heterotrimeric complex with SYO1 and RPL11A/RPL11B/uL5. Interaction of this complex with KAP104 allows the nuclear import of the heterotrimer.

It localises to the cytoplasm. Its subcellular location is the nucleus. Its function is as follows. Component of the ribosome, a large ribonucleoprotein complex responsible for the synthesis of proteins in the cell. The small ribosomal subunit (SSU) binds messenger RNAs (mRNAs) and translates the encoded message by selecting cognate aminoacyl-transfer RNA (tRNA) molecules. The large subunit (LSU) contains the ribosomal catalytic site termed the peptidyl transferase center (PTC), which catalyzes the formation of peptide bonds, thereby polymerizing the amino acids delivered by tRNAs into a polypeptide chain. The nascent polypeptides leave the ribosome through a tunnel in the LSU and interact with protein factors that function in enzymatic processing, targeting, and the membrane insertion of nascent chains at the exit of the ribosomal tunnel. The chain is Large ribosomal subunit protein uL18 from Saccharomyces cerevisiae (strain ATCC 204508 / S288c) (Baker's yeast).